The following is a 175-amino-acid chain: MRIEVLRIGQRAVRDDRVTTHAALVARAFGAERIFMEEVNPQVRDTLADVSSTWGGGFEVELIDSWRALLRSKKGSASIVHLTMYGETIDAAIGSLRRKEKILAVVGAGKVPRDVYELADYNVSIGGQPHSEISALAVFLDRLQEGRQLSKGYGDARRKVLPMRRGKHVLEGEPE.

S-adenosyl-L-methionine is bound at residue leucine 82.

It belongs to the aTrm56 family. Homodimer.

It is found in the cytoplasm. It catalyses the reaction cytidine(56) in tRNA + S-adenosyl-L-methionine = 2'-O-methylcytidine(56) in tRNA + S-adenosyl-L-homocysteine + H(+). In terms of biological role, specifically catalyzes the AdoMet-dependent 2'-O-ribose methylation of cytidine at position 56 in tRNAs. The polypeptide is tRNA (cytidine(56)-2'-O)-methyltransferase (Cenarchaeum symbiosum (strain A)).